The primary structure comprises 430 residues: Mannan endo-1,4-beta-mannosidase (430 aa).

Glutamate 173 acts as the Proton donor in catalysis. The Nucleophile role is filled by glutamate 269. 2 CBM10 domains span residues 357 to 390 (SCGTAPNGYPYCCNASSATGNGWGWENNRSCVVA) and 395 to 424 (SCNWYGTSYPICVNTSSGWGWENNRSCIAA).

It belongs to the glycosyl hydrolase 5 (cellulase A) family.

It catalyses the reaction Random hydrolysis of (1-&gt;4)-beta-D-mannosidic linkages in mannans, galactomannans and glucomannans.. Catalyzes the endo hydrolysis of beta-1,4-linked mannan, galactomannan and glucomannan. It is able to hydrolyze mannosidic linkages that are flanked by mannose or glucose. This chain is Mannan endo-1,4-beta-mannosidase, found in Cellvibrio japonicus (strain Ueda107) (Pseudomonas fluorescens subsp. cellulosa).